We begin with the raw amino-acid sequence, 559 residues long: Estrogen receptor beta (559 aa).

Positions 1–155 (MAVACSPEKD…SSGGKADLHF (155 aa)) are modulating. Residues 128–148 (TSSKSARRRSQENEEGEVSSG) form a disordered region. 2 consecutive NR C4-type zinc fingers follow at residues 156–176 (CAVC…CEGC) and 192–216 (CPAT…LHKC). A DNA-binding region (nuclear receptor) is located at residues 156-221 (CAVCHDYASG…RLHKCYNVGM (66 aa)). The segment covering 243-254 (RLSSQGRTSGPS) has biased composition (polar residues). Positions 243–269 (RLSSQGRTSGPSVLNGPAVGPLNTPQP) are disordered. The NR LBD domain occupies 273–509 (TSKQLIERIM…DLLLEMLDAH (237 aa)). Residues 514–559 (SRLPRRSPQQETVEQCDAPARPHSPGTSGPTNTWTPSCTGGRGEPQ) form a disordered region. The span at 538–551 (PGTSGPTNTWTPSC) shows a compositional bias: polar residues.

The protein belongs to the nuclear hormone receptor family. NR3 subfamily. In terms of assembly, binds DNA as a homodimer. Can form a heterodimer with ER-alpha.

It is found in the nucleus. Binds estrogens with an affinity similar to that of ER-alpha, and activates expression of reporter genes containing estrogen response elements (ERE) in an estrogen-dependent manner. This chain is Estrogen receptor beta (esr2), found in Sparus aurata (Gilthead sea bream).